We begin with the raw amino-acid sequence, 226 residues long: uncharacterized protein (226 aa).

Positions 121–163 (TVDELIKTIEKELNKVKKSRKNREKKTNEVEEIIEELIEEDDI) form a coiled coil.

This is an uncharacterized protein from Methanocaldococcus jannaschii (strain ATCC 43067 / DSM 2661 / JAL-1 / JCM 10045 / NBRC 100440) (Methanococcus jannaschii).